The primary structure comprises 143 residues: UPF0225 protein Reut_A0143 (143 aa).

Belongs to the UPF0225 family.

The polypeptide is UPF0225 protein Reut_A0143 (Cupriavidus pinatubonensis (strain JMP 134 / LMG 1197) (Cupriavidus necator (strain JMP 134))).